We begin with the raw amino-acid sequence, 158 residues long: MSGAVCPGSFDPVTLGHIDVFERASAQFDEVVVAVLVNPNKKGMFDLDERIAMIEESTTHLPNLRVESGQGLVVDFVKSRGLTAIVKGLRTGTDFEYELQMAQMNKHVAGVDTFFVATTPQYSFVSSSLAKEVASLGGDVSALLPSPVNRRLQEKLNG.

S9 is a substrate binding site. Residues 9 to 10 and H17 each bind ATP; that span reads SF. The substrate site is built by K41, V73, and K87. ATP is bound by residues 88-90, E98, and 122-128; these read GLR and YSFVSSS.

It belongs to the bacterial CoaD family. Homohexamer. The cofactor is Mg(2+).

It localises to the cytoplasm. It carries out the reaction (R)-4'-phosphopantetheine + ATP + H(+) = 3'-dephospho-CoA + diphosphate. It functions in the pathway cofactor biosynthesis; coenzyme A biosynthesis; CoA from (R)-pantothenate: step 4/5. Its function is as follows. Reversibly transfers an adenylyl group from ATP to 4'-phosphopantetheine, yielding dephospho-CoA (dPCoA) and pyrophosphate. This is Phosphopantetheine adenylyltransferase from Mycolicibacterium smegmatis (strain ATCC 700084 / mc(2)155) (Mycobacterium smegmatis).